Here is a 693-residue protein sequence, read N- to C-terminus: Auxin response factor 10 (693 aa).

Positions 115–217 (FAKTLTQSDA…DLCVGIRRAK (103 aa)) form a DNA-binding region, TF-B3. Positions 580–668 (TGHCKVFMES…DIGGDNVRKT (89 aa)) constitute a PB1 domain.

This sequence belongs to the ARF family. In terms of assembly, homodimers and heterodimers. Expressed in the whole plant.

The protein resides in the nucleus. Its function is as follows. Auxin response factors (ARFs) are transcriptional factors that bind specifically to the DNA sequence 5'-TGTCTC-3' found in the auxin-responsive promoter elements (AuxREs). Could act as transcriptional activator or repressor. Formation of heterodimers with Aux/IAA proteins may alter their ability to modulate early auxin response genes expression. The chain is Auxin response factor 10 (ARF10) from Arabidopsis thaliana (Mouse-ear cress).